The sequence spans 178 residues: E1B protein, small T-antigen (178 aa).

It belongs to the adenoviridae E1B 19 kDa protein family.

The protein localises to the host cell membrane. The protein resides in the host nucleus envelope. Its subcellular location is the host nucleus lamina. Functionally, putative adenovirus Bcl-2 homolog that inhibits apoptosis induced by TNF or FAS pathways, as well as p53-mediated apoptosis. Without E1B 19K function, virus production is compromised because of premature death of host cell. Interacts with Bax protein in cell lysates. This chain is E1B protein, small T-antigen, found in Human adenovirus B serotype 7 (HAdV-7).